Here is an 871-residue protein sequence, read N- to C-terminus: Synaptonemal complex protein 1 (871 aa).

A disordered region spans residues 1-40 (MQKLGFPAMKSLDKPRSLSGSANMYSFSNRKPPDSVSSGS). Positions 18–40 (LSGSANMYSFSNRKPPDSVSSGS) are enriched in polar residues. Coiled coils occupy residues 58–304 (MRTD…DKKN) and 331–608 (LALD…EESK). Disordered stretches follow at residues 708 to 741 (VMSD…RSEH) and 778 to 871 (SVLS…YAFD). Polar residues predominate over residues 719–728 (VNSNKNYSIS). Residues 729-741 (KDSRLGGSKRSEH) show a composition bias toward basic and acidic residues. Positions 831–847 (LTPQSIAKGTGMTSHAR) are enriched in polar residues.

It localises to the nucleus. Functionally, required for chromosome synapsis and normal fidelity of crossing over. This chain is Synaptonemal complex protein 1 (ZYP1A), found in Arabidopsis thaliana (Mouse-ear cress).